Reading from the N-terminus, the 489-residue chain is tRNA(Ile)-lysidine synthase (489 aa).

Residue 35–40 (SGGLDS) coordinates ATP.

The protein belongs to the tRNA(Ile)-lysidine synthase family.

Its subcellular location is the cytoplasm. It catalyses the reaction cytidine(34) in tRNA(Ile2) + L-lysine + ATP = lysidine(34) in tRNA(Ile2) + AMP + diphosphate + H(+). Ligates lysine onto the cytidine present at position 34 of the AUA codon-specific tRNA(Ile) that contains the anticodon CAU, in an ATP-dependent manner. Cytidine is converted to lysidine, thus changing the amino acid specificity of the tRNA from methionine to isoleucine. In Burkholderia pseudomallei (strain K96243), this protein is tRNA(Ile)-lysidine synthase.